The primary structure comprises 52 residues: Large ribosomal subunit protein bL33 (52 aa).

The protein belongs to the bacterial ribosomal protein bL33 family.

The protein is Large ribosomal subunit protein bL33 of Chlamydia abortus (strain DSM 27085 / S26/3) (Chlamydophila abortus).